The following is a 370-amino-acid chain: tRNA-specific 2-thiouridylase MnmA (370 aa).

ATP is bound by residues 20-27 (GMSGGVDS) and Met-46. The tract at residues 106–108 (NPD) is interaction with target base in tRNA. The active-site Nucleophile is the Cys-111. A disulfide bridge connects residues Cys-111 and Cys-207. Gly-135 lines the ATP pocket. An interaction with tRNA region spans residues 157-159 (KDQ). Catalysis depends on Cys-207, which acts as the Cysteine persulfide intermediate. The segment at 318–319 (RY) is interaction with tRNA.

It belongs to the MnmA/TRMU family.

It is found in the cytoplasm. It catalyses the reaction S-sulfanyl-L-cysteinyl-[protein] + uridine(34) in tRNA + AH2 + ATP = 2-thiouridine(34) in tRNA + L-cysteinyl-[protein] + A + AMP + diphosphate + H(+). Catalyzes the 2-thiolation of uridine at the wobble position (U34) of tRNA, leading to the formation of s(2)U34. The polypeptide is tRNA-specific 2-thiouridylase MnmA (Polynucleobacter asymbioticus (strain DSM 18221 / CIP 109841 / QLW-P1DMWA-1) (Polynucleobacter necessarius subsp. asymbioticus)).